We begin with the raw amino-acid sequence, 218 residues long: MMP 1-O-methyltransferase (218 aa).

Residues Phe-20, Gly-46, Ser-52, Asp-71, Gly-75, and Ser-124 each coordinate S-adenosyl-L-methionine. Asp-141 provides a ligand contact to Mg(2+). Catalysis depends on His-144, which acts as the Proton acceptor. Arg-151 is an S-adenosyl-L-methionine binding site. Residues His-169 and Asp-170 each coordinate Mg(2+).

Belongs to the methyltransferase superfamily. Homodimer. Mg(2+) serves as cofactor.

It carries out the reaction 3,3'-di-O-methyl-4alpha-mannobiose + S-adenosyl-L-methionine = 1,3,3'-tri-O-methyl-4alpha-mannobiose + S-adenosyl-L-homocysteine + H(+). With respect to regulation, inhibited by EDTA. In terms of biological role, involved in the biosynthesis of 3-O-methylmannose polysaccharides (MMP), which are intracellular polymethylated polysaccharides implicated in the modulation of fatty acid metabolism in non-tuberculous mycobacteria. Specifically methylates the 1-OH position of 3,3'-di-O-methyl-4alpha-mannobiose, a probable early precursor of MMP, yielding the reducing end dimannoside of MMP. The polypeptide is MMP 1-O-methyltransferase (Mycolicibacterium hassiacum (strain DSM 44199 / CIP 105218 / JCM 12690 / 3849) (Mycobacterium hassiacum)).